Here is a 99-residue protein sequence, read N- to C-terminus: Large ribosomal subunit protein uL23 (99 aa).

It belongs to the universal ribosomal protein uL23 family. As to quaternary structure, part of the 50S ribosomal subunit. Contacts protein L29, and trigger factor when it is bound to the ribosome.

Functionally, one of the early assembly proteins it binds 23S rRNA. One of the proteins that surrounds the polypeptide exit tunnel on the outside of the ribosome. Forms the main docking site for trigger factor binding to the ribosome. The protein is Large ribosomal subunit protein uL23 of Shewanella sediminis (strain HAW-EB3).